We begin with the raw amino-acid sequence, 425 residues long: Adenylosuccinate synthetase (425 aa).

Residues 12–18 (GDEGKGK) and 40–42 (GHT) contribute to the GTP site. The active-site Proton acceptor is the aspartate 13. 2 residues coordinate Mg(2+): aspartate 13 and glycine 40. Residues 13-16 (DEGK), 38-41 (NAGH), threonine 130, arginine 144, glutamine 224, threonine 239, and arginine 301 each bind IMP. The Proton donor role is filled by histidine 41. Substrate is bound at residue 297 to 303 (TVSNRRR). GTP contacts are provided by residues arginine 303, 329–331 (KLD), and 411–413 (STS).

It belongs to the adenylosuccinate synthetase family. In terms of assembly, homodimer. It depends on Mg(2+) as a cofactor.

Its subcellular location is the cytoplasm. It carries out the reaction IMP + L-aspartate + GTP = N(6)-(1,2-dicarboxyethyl)-AMP + GDP + phosphate + 2 H(+). Its pathway is purine metabolism; AMP biosynthesis via de novo pathway; AMP from IMP: step 1/2. Functionally, plays an important role in the de novo pathway of purine nucleotide biosynthesis. Catalyzes the first committed step in the biosynthesis of AMP from IMP. This is Adenylosuccinate synthetase from Wolbachia sp. subsp. Drosophila simulans (strain wRi).